A 425-amino-acid polypeptide reads, in one-letter code: Nuclear pore complex-interacting protein family member B6 (425 aa).

The disordered stretch occupies residues 332-414; that stretch reads SPLPPSVDDN…RRLSKLRTRH (83 aa). Positions 353 to 395 are enriched in basic and acidic residues; the sequence is EVEKPPKPKRWRVDEVEQSPKPKRRRVDEVEQSPKPKRQREAE. Residues 401 to 414 are compositionally biased toward basic residues; it reads KPKRRRLSKLRTRH.

Belongs to the NPIP family.

The sequence is that of Nuclear pore complex-interacting protein family member B6 (NPIPB6) from Homo sapiens (Human).